Consider the following 147-residue polypeptide: uncharacterized protein (147 aa).

This is an uncharacterized protein from Saccharomyces cerevisiae (strain ATCC 204508 / S288c) (Baker's yeast).